An 805-amino-acid polypeptide reads, in one-letter code: MTVLHWATISPFLLAILIPFLYKYARRIHTGWFVLVLPLVLFIYFIQYLSITSTGGVVEHTIPWVPSLGINFTVFVDGLSLLFALLITGIGTLVILYSIFYLSKKTESLNNFYVYLLMFMGAMLGVVLSDNLIVLYVFWELTSLASSLLISYWFHREKSTYGAQKSMLITVFGGFAMLGGFSLLYVMTGTFSIRGIIENVDLVTSSELFLPAMILVLLGAFTKSAQFPFHIWLPDAMEAPTPVSAYLHSATMVKAGIYLVARLTPVFAGSAEWFWLLTGFGVVTLLWGSTSAVRQKDLKGILAFSTVSQLGLIMTLLGLGSAAIYFGESVDPAFYSFAIMAAIFHLINHATFKGSLFMTAGIIDHETGTRDIRKLGGLMAIMPVTFTVSLIGLASMAGLPPFNGFLSKEMFFTALLRATEMNAFNMETFGIIIVVLAWIASVFTFLYCLIMFFKTFTGKFKPENYDVKVHEAPIGMLISPVILGSLVIVFGFFPNILAYTIIEPAMQAVLPTVLADGELFHVNIYMWHGFNAELFMTMGVVAAGIILFLMMKNWAKAAFYMKERDPLNWFYDSSLSGVITGSQFVTRIQMTGLLRDYFAYMIVFMILLLGYTMFRYDAFAIDTTNVTEIAPYIWVITIVFIVATLSIPFINKRITAVVVVGVIGFLLALLFVVFRAPDLALTQLLIETVTVLLLMLAFYHLPELRKEEFKPRFNVLNLIISIGVGFFITAIALSSLALGNEAGIEPISQFFIENSKELAGGYNMVNVILVDFRGLDTMLEVLVLGIAALGVIALIKLRMTGREDV.

21 helical membrane-spanning segments follow: residues 4–22 (LHWA…PFLY), 29–51 (HTGW…YLSI), 80–102 (SLLF…IFYL), 109–128 (LNNF…GVVL), 132–154 (LIVL…SYWF), 167–189 (MLIT…VMTG), 209–231 (FLPA…PFHI), 244–266 (SAYL…LTPV), 271–293 (AEWF…TSAV), 300–322 (GILA…LGSA), 332–354 (PAFY…TFKG), 375–397 (LGGL…ASMA), 431–453 (IIIV…IMFF), 474–496 (IGML…FPNI), 529–551 (GFNA…FLMM), 597–614 (YFAY…YTMF), 629–651 (IAPY…PFIN), 656–674 (AVVV…FVVF), 679–701 (LALT…FYHL), 714–736 (NVLN…LSSL), and 778–795 (MLEV…IALI).

The protein belongs to the CPA3 antiporters (TC 2.A.63) subunit A family. As to quaternary structure, forms a heterooligomeric complex that consists of seven subunits: MrpA, MrpB, MrpC, MrpD, MrpE, MrpF and MrpG.

Its subcellular location is the cell membrane. In terms of biological role, mnh complex is a Na(+)Li(+)/H(+) antiporter involved in Na(+) and/or Li(+) excretion and Na(+) resistance. Na(+)/H(+) antiport consumes a transmembrane electrical potential, and is thus inferred to be electrogenic. Does not transport K(+), Ca(2+) or Mg(2+). This chain is Na(+)/H(+) antiporter subunit A (mrpA), found in Alkalihalophilus pseudofirmus (strain ATCC BAA-2126 / JCM 17055 / OF4) (Bacillus pseudofirmus).